Reading from the N-terminus, the 466-residue chain is Methylenomycin A resistance protein (466 aa).

14 helical membrane-spanning segments follow: residues 16–36 (ISVL…VTVV), 56–76 (WVVD…GALA), 83–103 (TIYI…AASI), 113–133 (LIQG…LAAS), 146–166 (LWAA…GVLV), 168–188 (LAGW…ALIS), 203–223 (VNII…YALI), 234–254 (VILV…LREI), 276–296 (FIGF…SLFL), 305–325 (FMAG…NLLF), 337–357 (LMFV…VLIS), 367–387 (VLMS…TTVI), 409–429 (IGAL…ATWY), and 434–454 (FAFL…WLFL).

This sequence belongs to the major facilitator superfamily. EmrB family.

Its subcellular location is the cell membrane. In terms of biological role, resistance to the epoxide antibiotic methylenomycin. In Bacillus subtilis (strain 168), this protein is Methylenomycin A resistance protein (mmr).